The sequence spans 164 residues: Siroheme decarboxylase alpha subunit (164 aa).

This sequence belongs to the Ahb/Nir family. As to quaternary structure, forms a heterodimer composed of AhbA and AhbB.

The enzyme catalyses siroheme + 2 H(+) = 12,18-didecarboxysiroheme + 2 CO2. The protein operates within porphyrin-containing compound metabolism; protoheme biosynthesis. Involved in siroheme-dependent heme b biosynthesis. Catalyzes the decarboxylation of siroheme into didecarboxysiroheme. The chain is Siroheme decarboxylase alpha subunit from Oleidesulfovibrio alaskensis (strain ATCC BAA-1058 / DSM 17464 / G20) (Desulfovibrio alaskensis).